Reading from the N-terminus, the 217-residue chain is 2-C-methyl-D-erythritol 4-phosphate cytidylyltransferase (217 aa).

Belongs to the IspD/TarI cytidylyltransferase family. IspD subfamily.

It carries out the reaction 2-C-methyl-D-erythritol 4-phosphate + CTP + H(+) = 4-CDP-2-C-methyl-D-erythritol + diphosphate. The protein operates within isoprenoid biosynthesis; isopentenyl diphosphate biosynthesis via DXP pathway; isopentenyl diphosphate from 1-deoxy-D-xylulose 5-phosphate: step 2/6. Functionally, catalyzes the formation of 4-diphosphocytidyl-2-C-methyl-D-erythritol from CTP and 2-C-methyl-D-erythritol 4-phosphate (MEP). This is 2-C-methyl-D-erythritol 4-phosphate cytidylyltransferase from Chlamydia abortus (strain DSM 27085 / S26/3) (Chlamydophila abortus).